The following is a 100-amino-acid chain: RxLR effector protein Avrblb2 (100 aa).

Positions 1-22 are cleaved as a signal peptide; that stretch reads MRSFLYGVLAFAVLARSSAVAA. A RxLR-dEER motif is present at residues 43–57; sequence RSLRIEAQEVIQSGR. Positions 78–82 match the Calmodulin-binding motif motif; sequence RPDIK.

Belongs to the RxLR effector family. As to quaternary structure, interacts with the host papain-like cysteine protease C14. Interacts with the host calmodulin.

It is found in the secreted. The protein localises to the host cell membrane. Its function is as follows. Secreted effector that acts as an elicitor of hypersensitive response (HR) specifically on plants carrying defense protein Rpi-blb2. Enhances P.infestans colonization of Nicotiana benthamiana leaves. Interacts with, and subsequently prevents secretion into the apoplast of the host papain-like cysteine protease C14, thus promoting virulence by interfering with the execution of host defenses. Associates with calmodulin at the host plasma membrane to interfere with plant defense-associated calcium signaling in hosts. In Phytophthora infestans (strain T30-4) (Potato late blight agent), this protein is RxLR effector protein Avrblb2.